We begin with the raw amino-acid sequence, 328 residues long: MKFLAFLSLLSLVLQKAETASLLGEREREEQSPEEGDTYASLYVGNHTLSIEDYNEVIDLSNYEELADYGDQIPEAKISNLTLPTRTSPTSTVAQKTLSPNLTMAVPTTTGLLNSQSSHGLPTCLVCVCLGSSVYCDDADLENIPPLPQMTTYLYARFNHISHIQAGDFKGLTKLRRIDLSGNSISSIHNDALRLLPALQDLILPENQLAALPVLPSGIEFLDVRLNRLQSSGIQPEAFVALKKLQFLYLANNMLDSIPGPLPLSLRSLHLQNNMIETMESDTFCDTGEHRHERRQLEDIRLDGNPINLSLFPEAYFCLPRLPVGHFT.

A signal peptide spans 1 to 19; that stretch reads MKFLAFLSLLSLVLQKAET. N-linked (GlcNAc...) asparagine glycosylation is present at N46. At Y69 the chain carries Sulfotyrosine. N-linked (GlcNAc...) asparagine glycosylation is found at N80 and N101. Positions 112-149 constitute an LRRNT domain; the sequence is LLNSQSSHGLPTCLVCVCLGSSVYCDDADLENIPPLPQ. 6 LRR repeats span residues 150 to 171, 174 to 195, 198 to 219, 244 to 265, 266 to 286, and 296 to 316; these read MTTY…DFKG, KLRR…ALRL, ALQD…PSGI, KLQF…LPLS, LRSL…TFCD, and QLED…PEAY. A disulfide bond links C285 and C318. N308 is a glycosylation site (N-linked (GlcNAc...) asparagine).

This sequence belongs to the small leucine-rich proteoglycan (SLRP) family. SLRP class III subfamily. As to quaternary structure, homodimer. O-glycosylated. Post-translationally, sulfated on tyrosine residues. In terms of processing, proteolytically cleaved by MMP1, MMP2, MMP3, MMP7, MMP8, MMP9, ADAMTS4, and ADAMTS5. Proteolytically cleaved by MMP13. In terms of tissue distribution, expressed in cartilage (at protein level). Expressed in the vitreous collagen, inner limiting membrane, lens capsule, trabecular meshwork, anterior surface of the iris, the area adjacent to the nonpigmented ciliary epithelium, and weakly expressed in the retina of the eye (at protein level). Expressed in the nonpigmented ciliary epithelium of the eye.

It is found in the secreted. The protein resides in the extracellular space. The protein localises to the extracellular matrix. Functionally, inhibits angiogenesis in the vitreous humor of the eye, and therefore represses neovascularization. Binds collagen fibrils. May be involved in collagen fiber organization via regulation of other members of the small leucine-rich repeat proteoglycan superfamily. This Mus musculus (Mouse) protein is Opticin (Optc).